The following is a 116-amino-acid chain: Beta-D-galactosidase Rv1717 (116 aa).

One can recognise a Cupin type-2 domain in the interval 40 to 107 (LSVYRPGGTA…TDRQALLLVT (68 aa)).

It localises to the secreted. It is found in the cell wall. It carries out the reaction Hydrolysis of terminal non-reducing beta-D-galactose residues in beta-D-galactosides.. Beta-galactosidase activity is activated by Mg(2+) and significantly inhibited by Ca(2+), Cd(2+), Fe(2+), Ni(2+), Cu(2+) and Zn(2+). Inhibited by EDTA. Its function is as follows. Beta-D-galactopyranosidase that specifically recognizes the beta-glycosidic bonds formed with beta-D-galactopyranose (beta-D-Gal) or N-acetylgalactosamine (beta-D-GalNAc). May target the galactoside linkages in the exopolysaccharide component of the mycobacterial extracellular polymeric substance (EPS) and help dispersal of Mtb bacteria from a deteriorating biofilm. This is Beta-D-galactosidase Rv1717 from Mycobacterium tuberculosis (strain ATCC 25618 / H37Rv).